Consider the following 93-residue polypeptide: Small ribosomal subunit protein uS19 (93 aa).

The protein belongs to the universal ribosomal protein uS19 family.

Its function is as follows. Protein S19 forms a complex with S13 that binds strongly to the 16S ribosomal RNA. The protein is Small ribosomal subunit protein uS19 of Leuconostoc citreum (strain KM20).